A 189-amino-acid chain; its full sequence is ATP-dependent protease subunit HslV (189 aa).

Threonine 12 is an active-site residue. Residues alanine 172, cysteine 175, and threonine 178 each contribute to the Na(+) site.

Belongs to the peptidase T1B family. HslV subfamily. A double ring-shaped homohexamer of HslV is capped on each side by a ring-shaped HslU homohexamer. The assembly of the HslU/HslV complex is dependent on binding of ATP.

The protein localises to the cytoplasm. The enzyme catalyses ATP-dependent cleavage of peptide bonds with broad specificity.. Allosterically activated by HslU binding. In terms of biological role, protease subunit of a proteasome-like degradation complex believed to be a general protein degrading machinery. This Ehrlichia ruminantium (strain Welgevonden) protein is ATP-dependent protease subunit HslV.